Here is a 595-residue protein sequence, read N- to C-terminus: Adenine deaminase 3 (595 aa).

This sequence belongs to the metallo-dependent hydrolases superfamily. Adenine deaminase family. Mn(2+) serves as cofactor.

It catalyses the reaction adenine + H2O + H(+) = hypoxanthine + NH4(+). This Rhizobium meliloti (strain 1021) (Ensifer meliloti) protein is Adenine deaminase 3.